The sequence spans 117 residues: MDKRSSRLRRAKRARAKISELGANRLVIFRTPRHIYAQLIAPTGSEVIASASTLDKEVSAQIEKTGNVAAATAVGKAIAERAVAKGITKIAFDRSGFLYHGRVKALAEAAREAGLQF.

Belongs to the universal ribosomal protein uL18 family. As to quaternary structure, part of the 50S ribosomal subunit; part of the 5S rRNA/L5/L18/L25 subcomplex. Contacts the 5S and 23S rRNAs.

Its function is as follows. This is one of the proteins that bind and probably mediate the attachment of the 5S RNA into the large ribosomal subunit, where it forms part of the central protuberance. The chain is Large ribosomal subunit protein uL18 from Colwellia psychrerythraea (strain 34H / ATCC BAA-681) (Vibrio psychroerythus).